Consider the following 231-residue polypeptide: 7-cyano-7-deazaguanine synthase (231 aa).

Residue 8 to 18 coordinates ATP; it reads FSGGQDSTTCL. 4 residues coordinate Zn(2+): Cys188, Cys197, Cys200, and Cys203.

It belongs to the QueC family. It depends on Zn(2+) as a cofactor.

The enzyme catalyses 7-carboxy-7-deazaguanine + NH4(+) + ATP = 7-cyano-7-deazaguanine + ADP + phosphate + H2O + H(+). It functions in the pathway purine metabolism; 7-cyano-7-deazaguanine biosynthesis. In terms of biological role, catalyzes the ATP-dependent conversion of 7-carboxy-7-deazaguanine (CDG) to 7-cyano-7-deazaguanine (preQ(0)). This Cronobacter sakazakii (strain ATCC BAA-894) (Enterobacter sakazakii) protein is 7-cyano-7-deazaguanine synthase.